A 227-amino-acid polypeptide reads, in one-letter code: Protein lin-28 (227 aa).

Over residues 1-17 (MSTVVSEGRNDGNNRYS) the composition is skewed to polar residues. Positions 1–27 (MSTVVSEGRNDGNNRYSPQDEVEDRLP) are disordered. Positions 52 to 120 (RYFGSCKWFN…GREAYAVSGE (69 aa)) constitute a CSD domain. CCHC-type zinc fingers lie at residues 143–160 (RCFRCGKFATHKAKSCPN) and 166–183 (KVCYTCGSEEHVSSICPE). Positions 144, 147, 153, 158, 168, 171, 176, and 181 each coordinate Zn(2+). A disordered region spans residues 181–227 (CPERRRKHRPEQVAAEEAEAARMAAEKSSPTTSDDDIREKNSNSSDE).

The protein belongs to the lin-28 family. In terms of assembly, component of a complex at least containing lep-2, lin-28 and the long non-coding RNA lep-5, which mediates the degradation of lin-28. In terms of processing, cleavage by caspase ced-3 during larval development probably induces lin-28 degradation.

The protein resides in the cytoplasm. In terms of biological role, heterochronic protein which controls the choice of stage specific cell fates. Regulates the timing of the second larval stage events (L2 events) in the hypodermis. May negatively regulate the larval to adult transition via the suppression of the microRNA (miRNA) let-7 during L3. Through this regulatory role, controls the timing of the sexual maturation of the nervous system. Also has a role in the fox-1-sex-1-mediated determination of sexual fate. Plays a role in governing the developmental timing of male tail tip morphogenesis. Plays a role in controlling the seam cell number during larval stages. Plays a role in vulval development. The protein is Protein lin-28 of Caenorhabditis elegans.